Here is a 414-residue protein sequence, read N- to C-terminus: Cytochrome c-554 (414 aa).

An N-terminal signal peptide occupies residues 1–24 (MQSSRPSDRQLAIVVSVAVGIVVA). Heme-binding residues include methionine 110, cysteine 131, cysteine 134, histidine 135, methionine 154, cysteine 179, cysteine 182, histidine 183, methionine 283, cysteine 294, cysteine 297, histidine 298, cysteine 378, cysteine 381, and histidine 382.

In terms of processing, binds 4 heme groups per subunit. The N-terminus is blocked.

It is found in the periplasm. In terms of biological role, serves as the immediate electron donor to the oxidized BChl2 (bacteriochlorophyll dimer) that is oxidized in the first step of light-induced charge separation. Can also oxidize low-potential substrates. The polypeptide is Cytochrome c-554 (puf2C) (Chloroflexus aurantiacus (strain ATCC 29366 / DSM 635 / J-10-fl)).